Consider the following 408-residue polypeptide: RNA-splicing ligase RtcB1 (408 aa).

Residues Asp75, Cys78, His168, His185, and His281 each contribute to the Mn(2+) site. 167 to 171 (NHFIE) lines the GMP pocket. Residues 281–282 (HN), 313–316 (PGSM), Ser320, 337–340 (HGAG), and Lys407 each bind GMP. His337 functions as the GMP-histidine intermediate in the catalytic mechanism.

It belongs to the RtcB family. As to quaternary structure, monomer. Mn(2+) serves as cofactor.

It catalyses the reaction a 3'-end 3'-phospho-ribonucleotide-RNA + a 5'-end dephospho-ribonucleoside-RNA + GTP = a ribonucleotidyl-ribonucleotide-RNA + GMP + diphosphate. The catalysed reaction is a 3'-end 2',3'-cyclophospho-ribonucleotide-RNA + a 5'-end dephospho-ribonucleoside-RNA + GTP + H2O = a ribonucleotidyl-ribonucleotide-RNA + GMP + diphosphate + H(+). GTP-dependent RNA ligase that is involved in RNA repair. Joins RNA with 2',3'-cyclic-phosphate or 3'-phosphate ends to RNA with 5'-hydroxy ends. GTP-dependent RNA ligase that is involved in tRNA repair. Repairs broken tRNA(Asp) and tRNA(Arg) that have been cleaved by colicin E5 or colicin D, respectively. Does not repair damaged 16S rRNA in 30S ribosomal subunits. The chain is RNA-splicing ligase RtcB1 from Escherichia coli (strain ATCC 25922 / DSM 1103 / LMG 8223 / NCIMB 12210 / NCTC 12241 / WDCM 00013 / Seattle 1946).